A 282-amino-acid polypeptide reads, in one-letter code: Energy-coupling factor transporter ATP-binding protein EcfA2 (282 aa).

Positions Met-1 to Asp-234 constitute an ABC transporter domain. Gly-28–Ser-35 serves as a coordination point for ATP.

This sequence belongs to the ABC transporter superfamily. Energy-coupling factor EcfA family. In terms of assembly, forms a stable energy-coupling factor (ECF) transporter complex composed of 2 membrane-embedded substrate-binding proteins (S component), 2 ATP-binding proteins (A component) and 2 transmembrane proteins (T component).

It is found in the cell membrane. Functionally, ATP-binding (A) component of a common energy-coupling factor (ECF) ABC-transporter complex. Unlike classic ABC transporters this ECF transporter provides the energy necessary to transport a number of different substrates. In Halalkalibacterium halodurans (strain ATCC BAA-125 / DSM 18197 / FERM 7344 / JCM 9153 / C-125) (Bacillus halodurans), this protein is Energy-coupling factor transporter ATP-binding protein EcfA2.